Here is a 555-residue protein sequence, read N- to C-terminus: Carboxypeptidase Y homolog A (555 aa).

Positions Met1–Thr17 are cleaved as a signal peptide. The propeptide occupies Tyr18–Lys136. 5 disulfides stabilise this stretch: Cys191–Cys430, Cys325–Cys339, Cys349–Cys372, Cys356–Cys365, and Cys394–Cys400. N-linked (GlcNAc...) asparagine glycosylation occurs at Asn222. Ser278 is an active-site residue. Asp469 is a catalytic residue. Residue Asn520 is glycosylated (N-linked (GlcNAc...) asparagine). Residue His531 is part of the active site.

It belongs to the peptidase S10 family.

It is found in the vacuole. The catalysed reaction is Release of a C-terminal amino acid with broad specificity.. Its function is as follows. Vacuolar carboxypeptidase involved in degradation of small peptides. Digests preferentially peptides containing an aliphatic or hydrophobic residue in P1' position, as well as methionine, leucine or phenylalanine in P1 position of ester substrate. The chain is Carboxypeptidase Y homolog A (cpyA) from Talaromyces marneffei (strain ATCC 18224 / CBS 334.59 / QM 7333) (Penicillium marneffei).